The primary structure comprises 80 residues: Gamma-conotoxin-like Am6.6 (80 aa).

Residues 1-19 (MEKLTILLLVAAILMSTQA) form the signal peptide. Positions 20 to 45 (LNQEQRQQAKINLLSKKKPSAERWRR) are excised as a propeptide. 3 cysteine pairs are disulfide-bonded: C47-C61, C54-C65, and C60-C70. 2 positions are modified to 4-carboxyglutamate: E56 and E59. E71 is modified (4-carboxyglutamate). P76 bears the 4-hydroxyproline mark. Positions 78–80 (RAI) are excised as a propeptide.

It belongs to the conotoxin O2 family. As to expression, expressed by the venom duct.

The protein resides in the secreted. In terms of biological role, gamma-conotoxins may act on voltage-gated non-specific cation pacemaker channels (HCN). The polypeptide is Gamma-conotoxin-like Am6.6 (Conus amadis (Amadis cone)).